A 120-amino-acid chain; its full sequence is Spermidine export protein MdtJ (120 aa).

Transmembrane regions (helical) follow at residues 1–21, 31–51, 54–74, and 81–101; these read MFYWILLALAIIAEITGTLSM, TGFILMLAMIALSYIFLAFAV, IALGVAYALWEGIGILLITLF, and ESLSLLKIAGLTTLVIGIVLI.

It belongs to the drug/metabolite transporter (DMT) superfamily. Small multidrug resistance (SMR) (TC 2.A.7.1) family. MdtJ subfamily. As to quaternary structure, forms a complex with MdtI.

Its subcellular location is the cell inner membrane. Its function is as follows. Catalyzes the excretion of spermidine. The protein is Spermidine export protein MdtJ of Klebsiella pneumoniae subsp. pneumoniae (strain ATCC 700721 / MGH 78578).